Reading from the N-terminus, the 225-residue chain is Uracil-DNA glycosylase 1 (225 aa).

Residue Asp-68 is the Proton acceptor of the active site.

Belongs to the uracil-DNA glycosylase (UDG) superfamily. UNG family.

It localises to the cytoplasm. It carries out the reaction Hydrolyzes single-stranded DNA or mismatched double-stranded DNA and polynucleotides, releasing free uracil.. Functionally, excises uracil residues from the DNA which can arise as a result of misincorporation of dUMP residues by DNA polymerase or due to deamination of cytosine. The chain is Uracil-DNA glycosylase 1 (ung1) from Streptomyces avermitilis (strain ATCC 31267 / DSM 46492 / JCM 5070 / NBRC 14893 / NCIMB 12804 / NRRL 8165 / MA-4680).